The sequence spans 306 residues: Proteasome subunit beta (306 aa).

A propeptide spans 1–67 (MTWPNRDQPA…GLPTDAVPHG (67 aa)) (removed in mature form; by autocatalysis). Threonine 68 functions as the Nucleophile in the catalytic mechanism.

This sequence belongs to the peptidase T1B family. The 20S proteasome core is composed of 14 alpha and 14 beta subunits that assemble into four stacked heptameric rings, resulting in a barrel-shaped structure. The two inner rings, each composed of seven catalytic beta subunits, are sandwiched by two outer rings, each composed of seven alpha subunits. The catalytic chamber with the active sites is on the inside of the barrel. Has a gated structure, the ends of the cylinder being occluded by the N-termini of the alpha-subunits. Is capped by the proteasome-associated ATPase, ARC.

The protein localises to the cytoplasm. The enzyme catalyses Cleavage of peptide bonds with very broad specificity.. It participates in protein degradation; proteasomal Pup-dependent pathway. The formation of the proteasomal ATPase ARC-20S proteasome complex, likely via the docking of the C-termini of ARC into the intersubunit pockets in the alpha-rings, may trigger opening of the gate for substrate entry. Interconversion between the open-gate and close-gate conformations leads to a dynamic regulation of the 20S proteasome proteolysis activity. In terms of biological role, component of the proteasome core, a large protease complex with broad specificity involved in protein degradation. In Mycolicibacterium vanbaalenii (strain DSM 7251 / JCM 13017 / BCRC 16820 / KCTC 9966 / NRRL B-24157 / PYR-1) (Mycobacterium vanbaalenii), this protein is Proteasome subunit beta.